The following is a 487-amino-acid chain: Protein DETOXIFICATION 11 (487 aa).

Transmembrane regions (helical) follow at residues 35–55, 73–93, 122–142, 151–171, 184–204, 211–231, 264–284, 293–313, 330–350, 377–397, 412–432, and 435–455; these read LICFAAPMAAVVITQSMLQII, FAISFCNVTGFSFIMGLSCAL, LVCLPLSLLWFNMGKLLVILG, AGRFAAWLIPGLFAYAVLQPL, LLITSCVVFCLHVPLCWLLVY, IGGALALSLSYWLYAIFLGSF, AAMLCLEWWSYELIILLSGLL, VLSVCLQTLSMTYSIPLAIAA, AAHIVVYAAMSLAVVDALMVG, MAPLVSISLILDSLQGVLSGV, FGAFYLWGIPIAASLAFWVHL, and VGLWIGIIAGAVLQTLLLALV.

Belongs to the multi antimicrobial extrusion (MATE) (TC 2.A.66.1) family.

The protein localises to the membrane. The polypeptide is Protein DETOXIFICATION 11 (Arabidopsis thaliana (Mouse-ear cress)).